The primary structure comprises 125 residues: Fluoride-specific ion channel FluC (125 aa).

A run of 3 helical transmembrane segments spans residues 36–56 (GTIF…FLSI), 65–85 (FILF…TFAY), and 99–119 (IIYF…GMFL). G75 and T78 together coordinate Na(+).

Belongs to the fluoride channel Fluc/FEX (TC 1.A.43) family.

The protein localises to the cell inner membrane. The catalysed reaction is fluoride(in) = fluoride(out). Na(+) is not transported, but it plays an essential structural role and its presence is essential for fluoride channel function. In terms of biological role, fluoride-specific ion channel. Important for reducing fluoride concentration in the cell, thus reducing its toxicity. The sequence is that of Fluoride-specific ion channel FluC from Thermosipho africanus (strain TCF52B).